The primary structure comprises 431 residues: Lipoyl synthase 2, mitochondrial (431 aa).

Positions 21-43 (SPLGKLQEERGEGVAKDPKKDKQ) are disordered. Over residues 26–40 (LQEERGEGVAKDPKK) the composition is skewed to basic and acidic residues. Residues cysteine 127, cysteine 132, cysteine 138, cysteine 159, cysteine 163, cysteine 166, and serine 375 each contribute to the [4Fe-4S] cluster site. In terms of domain architecture, Radical SAM core spans 142–364 (DEEEGTATAT…EEEAMAMGFL (223 aa)).

This sequence belongs to the radical SAM superfamily. Lipoyl synthase family. Requires [4Fe-4S] cluster as cofactor.

It localises to the mitochondrion. The enzyme catalyses [[Fe-S] cluster scaffold protein carrying a second [4Fe-4S](2+) cluster] + N(6)-octanoyl-L-lysyl-[protein] + 2 oxidized [2Fe-2S]-[ferredoxin] + 2 S-adenosyl-L-methionine + 4 H(+) = [[Fe-S] cluster scaffold protein] + N(6)-[(R)-dihydrolipoyl]-L-lysyl-[protein] + 4 Fe(3+) + 2 hydrogen sulfide + 2 5'-deoxyadenosine + 2 L-methionine + 2 reduced [2Fe-2S]-[ferredoxin]. It participates in protein modification; protein lipoylation via endogenous pathway; protein N(6)-(lipoyl)lysine from octanoyl-[acyl-carrier-protein]: step 2/2. Functionally, catalyzes the radical-mediated insertion of two sulfur atoms into the C-6 and C-8 positions of the octanoyl moiety bound to the lipoyl domains of lipoate-dependent enzymes, thereby converting the octanoylated domains into lipoylated derivatives. This is Lipoyl synthase 2, mitochondrial from Trypanosoma cruzi (strain CL Brener).